Reading from the N-terminus, the 89-residue chain is Small ribosomal subunit protein uS15 (89 aa).

Belongs to the universal ribosomal protein uS15 family. Part of the 30S ribosomal subunit. Forms a bridge to the 50S subunit in the 70S ribosome, contacting the 23S rRNA.

One of the primary rRNA binding proteins, it binds directly to 16S rRNA where it helps nucleate assembly of the platform of the 30S subunit by binding and bridging several RNA helices of the 16S rRNA. Functionally, forms an intersubunit bridge (bridge B4) with the 23S rRNA of the 50S subunit in the ribosome. This chain is Small ribosomal subunit protein uS15, found in Nitrosomonas eutropha (strain DSM 101675 / C91 / Nm57).